Consider the following 691-residue polypeptide: Protein-glutamine gamma-glutamyltransferase E (691 aa).

Phosphotyrosine is present on Tyr-110. Thr-111 is subject to Phosphothreonine. Ca(2+)-binding residues include Ala-221, Asn-224, Asn-226, and Asp-227. Residue Cys-272 is part of the active site. Ca(2+) is bound by residues Asp-301, Asp-303, Asn-305, Ser-307, and Asp-324. Residues His-330 and Asp-353 contribute to the active site. Ca(2+) is bound by residues Asn-393, Thr-414, Glu-442, and Glu-447.

It belongs to the transglutaminase superfamily. Transglutaminase family. Consists of two polypeptide chains, which are synthesized as a precursor form of a single polypeptide. Requires Ca(2+) as cofactor. Activated by proteolytic processing. In vitro activation is commonly achieved by cleavage with dispase, a neutral bacterial protease. Physiological activation may be catalyzed by CTSL and, to a lesser extent, by CTSS.

Its subcellular location is the cytoplasm. It carries out the reaction L-glutaminyl-[protein] + L-lysyl-[protein] = [protein]-L-lysyl-N(6)-5-L-glutamyl-[protein] + NH4(+). Its function is as follows. Catalyzes the calcium-dependent formation of isopeptide cross-links between glutamine and lysine residues in various proteins, as well as the conjugation of polyamines to proteins. Involved in the formation of the cornified envelope (CE), a specialized component consisting of covalent cross-links of proteins beneath the plasma membrane of terminally differentiated keratinocytes. Catalyzes small proline-rich proteins and LOR cross-linking to form small interchain oligomers, which are further cross-linked by TGM1 onto the growing CE scaffold. In hair follicles, involved in cross-linking structural proteins to hardening the inner root sheath. The protein is Protein-glutamine gamma-glutamyltransferase E (TGM3) of Bos taurus (Bovine).